The primary structure comprises 145 residues: 3-dehydroquinate dehydratase (145 aa).

Tyr-23 functions as the Proton acceptor in the catalytic mechanism. Residues Asn-75, His-81, and Asp-88 each coordinate substrate. The active-site Proton donor is His-101. Substrate contacts are provided by residues 102–103 (LS) and Arg-112.

This sequence belongs to the type-II 3-dehydroquinase family. As to quaternary structure, homododecamer.

It catalyses the reaction 3-dehydroquinate = 3-dehydroshikimate + H2O. It functions in the pathway metabolic intermediate biosynthesis; chorismate biosynthesis; chorismate from D-erythrose 4-phosphate and phosphoenolpyruvate: step 3/7. Catalyzes a trans-dehydration via an enolate intermediate. The sequence is that of 3-dehydroquinate dehydratase from Legionella pneumophila (strain Lens).